A 370-amino-acid polypeptide reads, in one-letter code: Uroporphyrinogen decarboxylase (370 aa).

Residues 29-33 (RQAGR), aspartate 79, tyrosine 155, serine 210, and histidine 342 contribute to the substrate site.

Belongs to the uroporphyrinogen decarboxylase family. In terms of assembly, homodimer.

Its subcellular location is the cytoplasm. It carries out the reaction uroporphyrinogen III + 4 H(+) = coproporphyrinogen III + 4 CO2. Its pathway is porphyrin-containing compound metabolism; protoporphyrin-IX biosynthesis; coproporphyrinogen-III from 5-aminolevulinate: step 4/4. Its function is as follows. Catalyzes the decarboxylation of four acetate groups of uroporphyrinogen-III to yield coproporphyrinogen-III. This is Uroporphyrinogen decarboxylase from Variovorax paradoxus (strain S110).